We begin with the raw amino-acid sequence, 341 residues long: MKALSKLKAEEGIWMTDVPVPELGHNDLLIKIRKTAICGTDVHIYNWDEWSQKTIPVPMVVGHEYVGEVVGIGQEVKGFKIGDRVSGEGHITCGHCRNCRGGRTHLCRNTIGVGVNRPGCFAEYLVIPAFNAFKIPDNISDDLASIFDPFGNAVHTALSFDLVGEDVLVSGAGPIGIMAAAVAKHVGARNVVITDVNEYRLELARKMGITRAVNVAKENLNDVMAELGMTEGFDVGLEMSGAPPAFRTMLDTMNHGGRIAMLGIPPSDMSIDWTKVIFKGLFIKGIYGREMFETWYKMAALIQSGLDLSPIITHRFSIDDFQKGFDAMCSGQSGKVILSWD.

Cysteine 38 serves as a coordination point for Zn(2+). Catalysis depends on charge relay system residues threonine 40 and histidine 43. The Zn(2+) site is built by histidine 63, glutamate 64, cysteine 93, cysteine 96, cysteine 99, and cysteine 107. Residues isoleucine 175, aspartate 195, arginine 200, 262–264 (LGI), and 286–287 (IY) contribute to the NAD(+) site.

It belongs to the zinc-containing alcohol dehydrogenase family. In terms of assembly, homotetramer. Zn(2+) is required as a cofactor.

The protein localises to the cytoplasm. The catalysed reaction is L-threonine + NAD(+) = (2S)-2-amino-3-oxobutanoate + NADH + H(+). The protein operates within amino-acid degradation; L-threonine degradation via oxydo-reductase pathway; glycine from L-threonine: step 1/2. In terms of biological role, catalyzes the NAD(+)-dependent oxidation of L-threonine to 2-amino-3-ketobutyrate. This Escherichia coli O157:H7 protein is L-threonine 3-dehydrogenase.